The sequence spans 285 residues: Type II secretion system protein C (285 aa).

Residues 1–27 (MARLQAFKDPSFHSLVATFRSLPLIRR) are Cytoplasmic-facing. A helical membrane pass occupies residues 28-48 (FVLGLILLLICQQLAVLTWRF). The Periplasmic portion of the chain corresponds to 49–285 (LLPEDSRIVG…DIYLALDGDH (237 aa)).

The protein belongs to the GSP C family.

The protein localises to the cell inner membrane. Involved in a type II secretion system (T2SS, formerly general secretion pathway, GSP) for the export of proteins. Required for the translocation of the multiple pectic enzymes. The sequence is that of Type II secretion system protein C (outC) from Pectobacterium carotovorum subsp. carotovorum (Erwinia carotovora subsp. carotovora).